The sequence spans 565 residues: NAD-dependent malic enzyme (565 aa).

The active-site Proton donor is the tyrosine 104. Residue arginine 157 coordinates NAD(+). Lysine 175 acts as the Proton acceptor in catalysis. A divalent metal cation is bound by residues glutamate 246, aspartate 247, and aspartate 270. Residues aspartate 270 and asparagine 418 each coordinate NAD(+).

It belongs to the malic enzymes family. As to quaternary structure, homotetramer. It depends on Mg(2+) as a cofactor. Requires Mn(2+) as cofactor.

The catalysed reaction is (S)-malate + NAD(+) = pyruvate + CO2 + NADH. It carries out the reaction oxaloacetate + H(+) = pyruvate + CO2. The chain is NAD-dependent malic enzyme from Escherichia coli O6:H1 (strain CFT073 / ATCC 700928 / UPEC).